Here is a 364-residue protein sequence, read N- to C-terminus: Flagellar P-ring protein (364 aa).

A signal peptide spans 1–21; that stretch reads MNVFKVFCLMVLLGWQLPAMA.

This sequence belongs to the FlgI family. As to quaternary structure, the basal body constitutes a major portion of the flagellar organelle and consists of four rings (L,P,S, and M) mounted on a central rod.

It localises to the periplasm. The protein localises to the bacterial flagellum basal body. Assembles around the rod to form the L-ring and probably protects the motor/basal body from shearing forces during rotation. This Pseudoalteromonas translucida (strain TAC 125) protein is Flagellar P-ring protein.